Consider the following 177-residue polypeptide: Interleukin-1 receptor antagonist protein (177 aa).

The signal sequence occupies residues 1 to 25 (MEVCRCHHGYLISLLLFLFHSETAC). Cys91 and Cys141 are disulfide-bonded. 2 N-linked (GlcNAc...) asparagine glycosylation sites follow: Asn109 and Asn114.

This sequence belongs to the IL-1 family.

The protein localises to the secreted. In terms of biological role, anti-inflammatory antagonist of interleukin-1 family of proinflammatory cytokines such as interleukin-1beta/IL1B and interleukin-1alpha/IL1A. Protects from immune dysregulation and uncontrolled systemic inflammation triggered by IL1 for a range of innate stimulatory agents such as pathogens. The protein is Interleukin-1 receptor antagonist protein (IL1RN) of Tursiops truncatus (Atlantic bottle-nosed dolphin).